The following is a 250-amino-acid chain: Probable transcriptional regulatory protein MAP_1030 (250 aa).

The protein belongs to the TACO1 family.

It localises to the cytoplasm. This Mycolicibacterium paratuberculosis (strain ATCC BAA-968 / K-10) (Mycobacterium paratuberculosis) protein is Probable transcriptional regulatory protein MAP_1030.